Here is a 432-residue protein sequence, read N- to C-terminus: Adenylosuccinate synthetase (432 aa).

GTP-binding positions include Gly13–Lys19 and Gly41–Thr43. Asp14 (proton acceptor) is an active-site residue. 2 residues coordinate Mg(2+): Asp14 and Gly41. Residues Asp14–Lys17, Asn39–His42, Thr130, Arg144, Gln225, Thr240, and Arg304 contribute to the IMP site. Catalysis depends on His42, which acts as the Proton donor. Ala300–Arg306 contacts substrate. Residues Arg306, Lys332 to Asp334, and Ser415 to Gly417 each bind GTP.

It belongs to the adenylosuccinate synthetase family. In terms of assembly, homodimer. Mg(2+) serves as cofactor.

The protein localises to the cytoplasm. It catalyses the reaction IMP + L-aspartate + GTP = N(6)-(1,2-dicarboxyethyl)-AMP + GDP + phosphate + 2 H(+). Its pathway is purine metabolism; AMP biosynthesis via de novo pathway; AMP from IMP: step 1/2. Its function is as follows. Plays an important role in the de novo pathway of purine nucleotide biosynthesis. Catalyzes the first committed step in the biosynthesis of AMP from IMP. This is Adenylosuccinate synthetase from Proteus mirabilis (strain HI4320).